Reading from the N-terminus, the 315-residue chain is Mitochondrial glutamate carrier 2 (315 aa).

3 Solcar repeats span residues 6-92 (LSIT…FRRL), 100-210 (RNLK…LNNL), and 219-308 (ASFA…GIGE). A run of 3 helical transmembrane segments spans residues 12–32 (LING…IDLA), 61–81 (FFGM…EKAI), and 106–126 (MLAG…MEML). The tract at residues 141-160 (QGSASAPSTSRSYTTGSAST) is disordered. Over residues 142–159 (GSASAPSTSRSYTTGSAS) the composition is skewed to polar residues. At S145 the chain carries Phosphoserine. The next 3 helical transmembrane spans lie at 185-205 (GLGA…PLFA), 225-245 (FVSG…LDVL), and 288-308 (ALVI…GIGE).

It belongs to the mitochondrial carrier (TC 2.A.29) family. As to expression, expressed in brain, to a lesser extent in testis, and poorly in all the other tissues.

The protein localises to the mitochondrion inner membrane. It carries out the reaction L-glutamate(in) + H(+)(in) = L-glutamate(out) + H(+)(out). In terms of biological role, responsible for the transport of glutamate from the cytosol into the mitochondrial matrix with the concomitant import of a proton (symport system). The sequence is that of Mitochondrial glutamate carrier 2 from Homo sapiens (Human).